A 488-amino-acid chain; its full sequence is ATP synthase subunit beta (488 aa).

ATP is bound at residue 164–171 (GGAGVGKT).

The protein belongs to the ATPase alpha/beta chains family. As to quaternary structure, F-type ATPases have 2 components, CF(1) - the catalytic core - and CF(0) - the membrane proton channel. CF(1) has five subunits: alpha(3), beta(3), gamma(1), delta(1), epsilon(1). CF(0) has four main subunits: a(1), b(1), b'(1) and c(9-12).

The protein resides in the cellular thylakoid membrane. It carries out the reaction ATP + H2O + 4 H(+)(in) = ADP + phosphate + 5 H(+)(out). Functionally, produces ATP from ADP in the presence of a proton gradient across the membrane. The catalytic sites are hosted primarily by the beta subunits. The protein is ATP synthase subunit beta of Prochlorococcus marinus (strain NATL1A).